Here is a 97-residue protein sequence, read N- to C-terminus: MALTLQDVEHVARLARLRLSPAELEKMRDQLSNILDHFQMLQQIDVSAVPPTAQVTDLVNVLREDEIRPSLPHEQALANAPEQQDGMFRVRAIFEEE.

Belongs to the GatC family. As to quaternary structure, heterotrimer of A, B and C subunits.

The catalysed reaction is L-glutamyl-tRNA(Gln) + L-glutamine + ATP + H2O = L-glutaminyl-tRNA(Gln) + L-glutamate + ADP + phosphate + H(+). It carries out the reaction L-aspartyl-tRNA(Asn) + L-glutamine + ATP + H2O = L-asparaginyl-tRNA(Asn) + L-glutamate + ADP + phosphate + 2 H(+). Functionally, allows the formation of correctly charged Asn-tRNA(Asn) or Gln-tRNA(Gln) through the transamidation of misacylated Asp-tRNA(Asn) or Glu-tRNA(Gln) in organisms which lack either or both of asparaginyl-tRNA or glutaminyl-tRNA synthetases. The reaction takes place in the presence of glutamine and ATP through an activated phospho-Asp-tRNA(Asn) or phospho-Glu-tRNA(Gln). The polypeptide is Aspartyl/glutamyl-tRNA(Asn/Gln) amidotransferase subunit C (Roseiflexus sp. (strain RS-1)).